Here is a 271-residue protein sequence, read N- to C-terminus: Small ribosomal subunit protein uS9m (271 aa).

A mitochondrion-targeting transit peptide spans 1-11 (MFRSLAKLRCF). Positions 251-271 (KVERKKTGQPKARKKYTWVKR) are disordered. The segment covering 252 to 271 (VERKKTGQPKARKKYTWVKR) has biased composition (basic residues).

It belongs to the universal ribosomal protein uS9 family. In terms of assembly, component of the mitochondrial small ribosomal subunit (mt-SSU). Mature yeast 74S mitochondrial ribosomes consist of a small (37S) and a large (54S) subunit. The 37S small subunit contains a 15S ribosomal RNA (15S mt-rRNA) and at least 32 different proteins. The 54S large subunit contains a 21S rRNA (21S mt-rRNA) and at least 45 different proteins.

It is found in the mitochondrion. Its function is as follows. Component of the mitochondrial ribosome (mitoribosome), a dedicated translation machinery responsible for the synthesis of mitochondrial genome-encoded proteins, including at least some of the essential transmembrane subunits of the mitochondrial respiratory chain. The mitoribosomes are attached to the mitochondrial inner membrane and translation products are cotranslationally integrated into the membrane. This is Small ribosomal subunit protein uS9m (mrps9) from Schizosaccharomyces pombe (strain 972 / ATCC 24843) (Fission yeast).